Consider the following 591-residue polypeptide: L-fucose isomerase (591 aa).

Active-site proton acceptor residues include glutamate 337 and aspartate 361. Positions 337, 361, and 528 each coordinate Mn(2+).

Belongs to the L-fucose isomerase family. Homohexamer. It depends on Mn(2+) as a cofactor.

It is found in the cytoplasm. It catalyses the reaction L-fucose = L-fuculose. It functions in the pathway carbohydrate degradation; L-fucose degradation; L-lactaldehyde and glycerone phosphate from L-fucose: step 1/3. In terms of biological role, converts the aldose L-fucose into the corresponding ketose L-fuculose. The chain is L-fucose isomerase from Escherichia coli (strain ATCC 8739 / DSM 1576 / NBRC 3972 / NCIMB 8545 / WDCM 00012 / Crooks).